A 434-amino-acid chain; its full sequence is Citrate synthase (434 aa).

Catalysis depends on residues His310 and Asp368.

This sequence belongs to the citrate synthase family.

It carries out the reaction oxaloacetate + acetyl-CoA + H2O = citrate + CoA + H(+). The protein operates within carbohydrate metabolism; tricarboxylic acid cycle; isocitrate from oxaloacetate: step 1/2. The polypeptide is Citrate synthase (gltA) (Bradyrhizobium diazoefficiens (strain JCM 10833 / BCRC 13528 / IAM 13628 / NBRC 14792 / USDA 110)).